The primary structure comprises 454 residues: Nuclear envelope integral membrane protein (454 aa).

A signal peptide spans 1–18 (MHSAGLLMLTVAGYFTSG). N-linked (GlcNAc...) asparagine glycosylation is present at N38. Transmembrane regions (helical) follow at residues 138 to 158 (IPLD…LFSA), 166 to 186 (VFYY…VVIY), 197 to 217 (MMYG…KQLA), 231 to 251 (VLGY…RIGP), and 280 to 300 (TSAV…PISW). Positions 388-405 (SMDAAPEEESVEEPEEDK) are enriched in acidic residues. Positions 388–454 (SMDAAPEEES…QEVDLRQVVQ (67 aa)) are disordered. Over residues 414–424 (NSQFRYQQAAR) the composition is skewed to polar residues. Over residues 428–446 (PEPESESDDSEEEEFFEQE) the composition is skewed to acidic residues.

Belongs to the NEMP family. In terms of assembly, interacts with OTE. As to expression, expressed in both germline and somatic cells in the larval testis and prepupal ovary (at protein level). Also detected in the larval eye and larval wing disk (at protein level).

It localises to the nucleus inner membrane. Contributes to nuclear envelope stiffness in germ cells. Required for male and female fertility. This Drosophila melanogaster (Fruit fly) protein is Nuclear envelope integral membrane protein.